The following is a 560-amino-acid chain: Terminal uridylyltransferase Tailor (560 aa).

Residues 169-197 (EQHPKPNPNNQPVQPHPTHQTKQEKKQAQ) form a disordered region. Residues 176-188 (PNNQPVQPHPTHQ) are compositionally biased toward low complexity. The Mg(2+) site is built by aspartate 278 and aspartate 280. The PAP-associated domain occupies 455 to 522 (LRNFFAYFAK…VVQDPIQLNH (68 aa)).

It depends on Mg(2+) as a cofactor.

Its subcellular location is the cytoplasm. The catalysed reaction is RNA(n) + UTP = RNA(n)-3'-uridine ribonucleotide + diphosphate. In terms of biological role, uridylyltransferase which mediates terminal uridylation of miRNAs, leading to their degradation. Has high specificity for splicing-derived miRNAs (mirtrons) and other miRNA substrates containing a 3'-G terminal nucleotide. Appears to be a major suppressor of mirtron biogenesis. This chain is Terminal uridylyltransferase Tailor, found in Drosophila melanogaster (Fruit fly).